The primary structure comprises 210 residues: Thymidylate kinase (210 aa).

10 to 17 is an ATP binding site; the sequence is GPEGAGKS.

The protein belongs to the thymidylate kinase family.

It catalyses the reaction dTMP + ATP = dTDP + ADP. Its function is as follows. Phosphorylation of dTMP to form dTDP in both de novo and salvage pathways of dTTP synthesis. The sequence is that of Thymidylate kinase from Pseudomonas fluorescens (strain ATCC BAA-477 / NRRL B-23932 / Pf-5).